A 458-amino-acid chain; its full sequence is V-type ATP synthase beta chain (458 aa).

It belongs to the ATPase alpha/beta chains family.

Its function is as follows. Produces ATP from ADP in the presence of a proton gradient across the membrane. The V-type beta chain is a regulatory subunit. This chain is V-type ATP synthase beta chain, found in Enterococcus faecalis (strain ATCC 700802 / V583).